Reading from the N-terminus, the 150-residue chain is NmrA-like family domain-containing protein 1 (150 aa).

Residues 7 to 12 (GATGAQ), 33 to 37 (RNPEQ), and Lys71 contribute to the NADP(+) site.

Belongs to the NmrA-type oxidoreductase family. Homodimer. Interacts with ASS1. Interaction is enhanced by low NADPH/NADP(+) ratios, which results in inhibition of ASS1 activity.

Its subcellular location is the cytoplasm. It is found in the perinuclear region. It localises to the nucleus. Functionally, redox sensor protein. Undergoes restructuring and subcellular redistribution in response to changes in intracellular NADPH/NADP(+) levels. At low NADPH concentrations the protein is found mainly as a monomer, and binds argininosuccinate synthase (ASS1), the enzyme involved in nitric oxide synthesis. Association with ASS1 impairs its activity and reduces the production of nitric oxide, which subsecuently prevents apoptosis. Under normal NADPH concentrations, the protein is found as a dimer and hides the binding site for ASS1. The homodimer binds one molecule of NADPH. Has higher affinity for NADPH than for NADP(+). Binding to NADPH is necessary to form a stable dimer. The sequence is that of NmrA-like family domain-containing protein 1 from Rattus norvegicus (Rat).